A 382-amino-acid polypeptide reads, in one-letter code: MPGKHSDSATSELCEKCKENISILVVRAKPICHDCFARYVHTKAIKRLESFRVNFAASPDQQRKILLPLSHGVSSTTLLHILDLHLNTQRSKTNRTGFAISVLVVDEGSLDPARLDKVRERYANHDYASLPLHDVFRLLPDDASLRAFLPESQVQEVCSTQEQLTSLIASLTSATARADVLTTLRTRLIVEHAKQTGCESILWGDSTTRLAEKTLAETAKGRGFSLPWQISDGKSPFDINFHYPLRDVLKKELFSYVDLAEPALSALVYEPQSGATQASMSSKNTTIDDLMKQYFESVEENFPSIVSNVVRTTGKLEVPTGATSNPRCSLCGMPVPDGRFGIHGWGGDQHGGADDAAAVSGGSLCYGCTRSIPQRGTAVASK.

It belongs to the CTU2/NCS2 family.

The protein localises to the cytoplasm. Its pathway is tRNA modification; 5-methoxycarbonylmethyl-2-thiouridine-tRNA biosynthesis. Its function is as follows. Plays a central role in 2-thiolation of mcm(5)S(2)U at tRNA wobble positions of tRNA(Lys), tRNA(Glu) and tRNA(Gln). May act by forming a heterodimer with NCS6 that ligates sulfur from thiocarboxylated URM1 onto the uridine of tRNAs at wobble position. Prior mcm(5) tRNA modification by the elongator complex is required for 2-thiolation. May also be involved in protein urmylation. In Phaeosphaeria nodorum (strain SN15 / ATCC MYA-4574 / FGSC 10173) (Glume blotch fungus), this protein is Cytoplasmic tRNA 2-thiolation protein 2.